The chain runs to 597 residues: (E)-sabinene hydrate synthase, chloroplastic (597 aa).

The transit peptide at 1-47 (MSTISINHVGILRNPLQCKNKRTSINKPWSLSLPRSSPASRLVKPCR) directs the protein to the chloroplast. The Mn(2+) site is built by Asp-353 and Asp-357. Positions 353-357 (DDVYD) match the DDXXD motif motif. Homodimerization regions lie at residues 359-365 (YGTLDEL) and 431-468 (EAGWYENGYTPSLEEYLTNATISIGVPPIVLPVEVSLP). Asp-495 and Glu-503 together coordinate Mn(2+).

Belongs to the terpene synthase family. Homodimer. The cofactor is Mn(2+). Requires Mg(2+) as cofactor.

Its subcellular location is the plastid. The protein resides in the chloroplast. The catalysed reaction is (2E)-geranyl diphosphate + H2O = sabinene hydrate + diphosphate. The protein operates within secondary metabolite biosynthesis; terpenoid biosynthesis. Its function is as follows. Involved in the biosynthesis of phenolic monoterpenes natural products. Monoterpene synthase which catalyzes the conversion of geranyl diphosphate (GPP) to sabinene hydrate, specifically (E)-sabinene hydrate, and the formation of minor amounts and traces of several other monoterpenes (e.g. mainly alpha-pinene, limonene and alpha-terpineol). The polypeptide is (E)-sabinene hydrate synthase, chloroplastic (Thymus vulgaris (Thyme)).